An 86-amino-acid polypeptide reads, in one-letter code: Small ribosomal subunit protein bS20 (86 aa).

Residues 1 to 11 (MANIKQQKKRN) are compositionally biased toward basic residues. The tract at residues 1-20 (MANIKQQKKRNKTNEKRRLQ) is disordered.

Belongs to the bacterial ribosomal protein bS20 family.

Binds directly to 16S ribosomal RNA. The sequence is that of Small ribosomal subunit protein bS20 from Aster yellows witches'-broom phytoplasma (strain AYWB).